The following is a 371-amino-acid chain: Protein MxiG (371 aa).

The chain crosses the membrane as a helical span at residues 127–141; sequence VFFFFAVIVVLIIIF.

The protein localises to the cell inner membrane. The protein resides in the cell outer membrane. Functionally, involved in the secretion of the Ipa antigens. Involved in the intracellular dissemination of Shigella. Part of the Mxi-Spa secretion apparatus. The sequence is that of Protein MxiG (mxiG) from Shigella flexneri.